The primary structure comprises 379 residues: ORC1-type DNA replication protein 2 (379 aa).

Residues 69-73 (TGKTT), Tyr-211, and Arg-223 each bind ATP.

It belongs to the CDC6/cdc18 family. Interacts with MCM. Post-translationally, autophosphorylated on a serine. Phosphorylation is inhibited by binding to MCM. Both single-stranded DNA and double-stranded DNA inhibit the phosphorylation reaction.

Its function is as follows. Involved in regulation of DNA replication. Dissociates the MCM complex and inhibits the MCM helicase activity, suggesting that it may function as a helicase loader. Binds to both specific and random double-stranded or single-stranded DNA. In Methanothermobacter thermautotrophicus (strain ATCC 29096 / DSM 1053 / JCM 10044 / NBRC 100330 / Delta H) (Methanobacterium thermoautotrophicum), this protein is ORC1-type DNA replication protein 2 (cdc6-2).